The chain runs to 573 residues: 2-isopropylmalate synthase (573 aa).

In terms of domain architecture, Pyruvate carboxyltransferase spans 37–314 (PRWLSTDLRD…DPQIDFSDID (278 aa)). Residues Asp-46, His-253, His-255, and Asn-289 each contribute to the Mg(2+) site. The interval 456–573 (NPDNPWGRIQ…VVSAVNRATR (118 aa)) is regulatory domain.

Belongs to the alpha-IPM synthase/homocitrate synthase family. LeuA type 2 subfamily. In terms of assembly, homodimer. Requires Mg(2+) as cofactor.

It is found in the cytoplasm. It carries out the reaction 3-methyl-2-oxobutanoate + acetyl-CoA + H2O = (2S)-2-isopropylmalate + CoA + H(+). It functions in the pathway amino-acid biosynthesis; L-leucine biosynthesis; L-leucine from 3-methyl-2-oxobutanoate: step 1/4. Its function is as follows. Catalyzes the condensation of the acetyl group of acetyl-CoA with 3-methyl-2-oxobutanoate (2-ketoisovalerate) to form 3-carboxy-3-hydroxy-4-methylpentanoate (2-isopropylmalate). This is 2-isopropylmalate synthase from Streptomyces coelicolor (strain ATCC BAA-471 / A3(2) / M145).